Here is an 88-residue protein sequence, read N- to C-terminus: Small ribosomal subunit protein bS16c (88 aa).

Belongs to the bacterial ribosomal protein bS16 family.

Its subcellular location is the plastid. The protein resides in the chloroplast. In Oenothera elata subsp. hookeri (Hooker's evening primrose), this protein is Small ribosomal subunit protein bS16c.